The primary structure comprises 2561 residues: Plipastatin synthase subunit A (2561 aa).

Residues M1–S1038 form a domain 1 (glutamate-activating) region. The condensation 1 stretch occupies residues S2–D300. The interval T485–V888 is adenylation 1. Residues A961–T1036 form the Carrier 1 domain. Position 996 is an O-(pantetheine 4'-phosphoryl)serine (S996). The segment at K1048–E1338 is condensation 2. The interval K1048 to I2554 is domain 2 (D-ornithine-activating). Residues S1525 to V1932 form an adenylation 2 region. Residues A2007–A2081 enclose the Carrier 2 domain. S2042 bears the O-(pantetheine 4'-phosphoryl)serine mark. The segment at A2089–I2554 is epimerization.

Belongs to the ATP-dependent AMP-binding enzyme family. It depends on pantetheine 4'-phosphate as a cofactor.

This protein is a multifunctional enzyme, able to activate and polymerize the amino acids Glu and Orn as part of the biosynthesis of the lipopeptide antibiotic lipastatin. The Orn residue is further epimerized to the D-isomer form. The activation sites for these amino acids consist of individual domains. In Bacillus subtilis (strain 168), this protein is Plipastatin synthase subunit A (ppsA).